A 142-amino-acid chain; its full sequence is UPF0275 protein PM0505 (142 aa).

It belongs to the UPF0275 family.

This chain is UPF0275 protein PM0505, found in Pasteurella multocida (strain Pm70).